The following is a 151-amino-acid chain: Cytochrome c-type biogenesis protein CcmE (151 aa).

Residues 1–8 (MNPQRKKR) are Cytoplasmic-facing. Residues 9–29 (LLLIVGLLVGVGVAVGFALSA) form a helical; Signal-anchor for type II membrane protein membrane-spanning segment. At 30–151 (LQQNINLFYT…QAAAGGETKP (122 aa)) the chain is on the periplasmic side. Heme is bound by residues His-124 and Tyr-128.

This sequence belongs to the CcmE/CycJ family.

The protein localises to the cell inner membrane. Functionally, heme chaperone required for the biogenesis of c-type cytochromes. Transiently binds heme delivered by CcmC and transfers the heme to apo-cytochromes in a process facilitated by CcmF and CcmH. The polypeptide is Cytochrome c-type biogenesis protein CcmE (Pseudomonas putida (strain ATCC 700007 / DSM 6899 / JCM 31910 / BCRC 17059 / LMG 24140 / F1)).